The primary structure comprises 174 residues: RNA pyrophosphohydrolase (174 aa).

Residues 6–149 enclose the Nudix hydrolase domain; sequence GFRANVGIVI…KREVYRRAMK (144 aa). A Nudix box motif is present at residues 38–59; that stretch reads GGIDEGETAEQTMYRELYEEVG.

Belongs to the Nudix hydrolase family. RppH subfamily. The cofactor is a divalent metal cation.

Its function is as follows. Accelerates the degradation of transcripts by removing pyrophosphate from the 5'-end of triphosphorylated RNA, leading to a more labile monophosphorylated state that can stimulate subsequent ribonuclease cleavage. The polypeptide is RNA pyrophosphohydrolase (Pseudoalteromonas atlantica (strain T6c / ATCC BAA-1087)).